The chain runs to 377 residues: Dual-specificity RNA methyltransferase RlmN (377 aa).

Glu-102 (proton acceptor) is an active-site residue. One can recognise a Radical SAM core domain in the interval 108-345 (EPDRRTLCVS…AVVRKNRGGD (238 aa)). Cys-115 and Cys-350 are oxidised to a cystine. Residues Cys-122, Cys-126, and Cys-129 each contribute to the [4Fe-4S] cluster site. Residues 177–178 (GE), Ser-209, 231–233 (SLN), and Asn-307 contribute to the S-adenosyl-L-methionine site. Cys-350 (S-methylcysteine intermediate) is an active-site residue. The tract at residues 354–377 (AAEGGPGDPRRPAPPPLTRLPAAG) is disordered.

It belongs to the radical SAM superfamily. RlmN family. It depends on [4Fe-4S] cluster as a cofactor.

The protein localises to the cytoplasm. The enzyme catalyses adenosine(2503) in 23S rRNA + 2 reduced [2Fe-2S]-[ferredoxin] + 2 S-adenosyl-L-methionine = 2-methyladenosine(2503) in 23S rRNA + 5'-deoxyadenosine + L-methionine + 2 oxidized [2Fe-2S]-[ferredoxin] + S-adenosyl-L-homocysteine. It catalyses the reaction adenosine(37) in tRNA + 2 reduced [2Fe-2S]-[ferredoxin] + 2 S-adenosyl-L-methionine = 2-methyladenosine(37) in tRNA + 5'-deoxyadenosine + L-methionine + 2 oxidized [2Fe-2S]-[ferredoxin] + S-adenosyl-L-homocysteine. Its function is as follows. Specifically methylates position 2 of adenine 2503 in 23S rRNA and position 2 of adenine 37 in tRNAs. m2A2503 modification seems to play a crucial role in the proofreading step occurring at the peptidyl transferase center and thus would serve to optimize ribosomal fidelity. The sequence is that of Dual-specificity RNA methyltransferase RlmN from Anaeromyxobacter sp. (strain Fw109-5).